The chain runs to 500 residues: Alpha-L-arabinofuranosidase (500 aa).

An N-terminal signal peptide occupies residues 1–21 (MLSNARIIAAGCIAAGSLVAA). Asparagine 467 is a glycosylation site (N-linked (GlcNAc...) asparagine).

Belongs to the glycosyl hydrolase 54 family.

The catalysed reaction is Hydrolysis of terminal non-reducing alpha-L-arabinofuranoside residues in alpha-L-arabinosides.. It participates in glycan metabolism; L-arabinan degradation. The polypeptide is Alpha-L-arabinofuranosidase (abf1) (Hypocrea jecorina (Trichoderma reesei)).